The primary structure comprises 473 residues: Uronate isomerase (473 aa).

Belongs to the metallo-dependent hydrolases superfamily. Uronate isomerase family.

It carries out the reaction D-glucuronate = D-fructuronate. The catalysed reaction is aldehydo-D-galacturonate = keto-D-tagaturonate. Its pathway is carbohydrate metabolism; pentose and glucuronate interconversion. The chain is Uronate isomerase from Bacillus licheniformis (strain ATCC 14580 / DSM 13 / JCM 2505 / CCUG 7422 / NBRC 12200 / NCIMB 9375 / NCTC 10341 / NRRL NRS-1264 / Gibson 46).